Consider the following 120-residue polypeptide: Large ribosomal subunit protein uL18 (120 aa).

The protein belongs to the universal ribosomal protein uL18 family. Part of the 50S ribosomal subunit; part of the 5S rRNA/L5/L18/L25 subcomplex. Contacts the 5S and 23S rRNAs.

This is one of the proteins that bind and probably mediate the attachment of the 5S RNA into the large ribosomal subunit, where it forms part of the central protuberance. The chain is Large ribosomal subunit protein uL18 from Rhodopseudomonas palustris (strain HaA2).